We begin with the raw amino-acid sequence, 664 residues long: Protein SIEVE ELEMENT OCCLUSION C (664 aa).

The protein is Protein SIEVE ELEMENT OCCLUSION C of Arabidopsis thaliana (Mouse-ear cress).